An 855-amino-acid chain; its full sequence is Cell surface glycoprotein (855 aa).

The signal sequence occupies residues 1–22 (MTANKQVRAVLLAALMVFSVFA). N78, N83, N108, N167, N174, N187, N203, N227, N230, N313, N363, N441, N548, N588, N608, N620, N642, N656, and N754 each carry an N-linked (GlcNAc...) asparagine glycan. Residues 782 to 802 (ETTTAAETTTTEESTETTTTE) are compositionally biased toward low complexity. The segment at 782 to 831 (ETTTAAETTTTEESTETTTTEESTEEPTETATATEEPTEEATEETTESST) is disordered. Residues 817–827 (EPTEEATEETT) are compositionally biased toward acidic residues. Residues 831-851 (TPGFGVVVALVALVAAALLAV) form a helical membrane-spanning segment. The PGF sorting signal signature appears at 832–834 (PGF).

Belongs to the halobacterial S-layer protein family. Glycosylated. In terms of processing, cleaved by the archaeosortase ArtA at the C-terminus, with removal of a short hydrophobic segment. Post-translationally, lipidation.

The protein localises to the secreted. It localises to the cell wall. It is found in the S-layer. The protein resides in the cell membrane. Functionally, S-layer protein. The S-layer is a paracrystalline mono-layered assembly of proteins which coats the surface of the cell. The protein is Cell surface glycoprotein of Haloferax gibbonsii.